Reading from the N-terminus, the 119-residue chain is Autophagy-related protein 8 (119 aa).

The Phosphatidylethanolamine amidated glycine moiety is linked to residue Gly116. Positions 117–119 are cleaved as a propeptide — removed in mature form; that stretch reads EAL.

It belongs to the ATG8 family. Conjugation to phosphatidylethanolamine (PE) leads to homodimerization. Interacts with ATG1, ATG3, ATG4, ATG7 and ATG12. In terms of processing, the C-terminal Glu-117, Ala-118 and Leu-119 residues of ATG8 are removed by ATG4 to expose Gly-116 at the C-terminus. This Gly-116 forms then a thioester bond with ATG7 (E1-like activating enzyme) before being transferred to ATG3 (the specific E2 conjugating enzyme), in order to be finally amidated with phosphatidylethanolamine. This lipid modification anchors ATG8 to membranes and can be reversed by ATG4, releasing soluble ATG8.

The protein localises to the cytoplasmic vesicle. It is found in the cvt vesicle membrane. Its subcellular location is the autophagosome membrane. The protein resides in the vacuole membrane. Ubiquitin-like modifier involved in cytoplasm to vacuole transport (Cvt) vesicles and autophagosome formation. With ATG4, mediates the delivery of the vesicles and autophagosomes to the vacuole via the microtubule cytoskeleton. Required for selective autophagic degradation of the nucleus (nucleophagy) as well as for mitophagy which contributes to regulate mitochondrial quantity and quality by eliminating the mitochondria to a basal level to fulfill cellular energy requirements and preventing excess ROS production. Also participates in membrane fusion events that take place in the early secretory pathway. Also involved in endoplasmic reticulum-specific autophagic process and is essential for the survival of cells subjected to severe ER stress. The ATG8-PE conjugate mediates tethering between adjacent membranes and stimulates membrane hemifusion, leading to expansion of the autophagosomal membrane during autophagy. Moreover not only conjugation, but also subsequent ATG8-PE deconjugation is an important step required to facilitate multiple events during macroautophagy, and especially for efficient autophagosome biogenesis, the assembly of ATG9-containing tubulovesicular clusters into phagophores/autophagosomes, and for the disassembly of PAS-associated ATG components. Autophagy is required for conidiation, aerial mycelial growth, and pseudothecia formation, but not for host invasion. This chain is Autophagy-related protein 8, found in Cochliobolus heterostrophus (strain C4 / ATCC 48331 / race T) (Southern corn leaf blight fungus).